The primary structure comprises 449 residues: Ribulose bisphosphate carboxylase large chain (449 aa).

Positions 1-2 (MS) are excised as a propeptide. Position 3 is an N-acetylproline (Pro3). At Lys14 the chain carries N6,N6,N6-trimethyllysine. The substrate site is built by Asn123 and Thr173. The active-site Proton acceptor is the Lys175. Residue Lys177 participates in substrate binding. Positions 201, 203, and 204 each coordinate Mg(2+). The residue at position 201 (Lys201) is an N6-carboxylysine. The active-site Proton acceptor is the His294. Positions 295, 327, and 379 each coordinate substrate.

The protein belongs to the RuBisCO large chain family. Type I subfamily. In terms of assembly, heterohexadecamer of 8 large chains and 8 small chains; disulfide-linked. The disulfide link is formed within the large subunit homodimers. The cofactor is Mg(2+). The disulfide bond which can form in the large chain dimeric partners within the hexadecamer appears to be associated with oxidative stress and protein turnover.

The protein localises to the plastid. It is found in the chloroplast. It catalyses the reaction 2 (2R)-3-phosphoglycerate + 2 H(+) = D-ribulose 1,5-bisphosphate + CO2 + H2O. It carries out the reaction D-ribulose 1,5-bisphosphate + O2 = 2-phosphoglycolate + (2R)-3-phosphoglycerate + 2 H(+). RuBisCO catalyzes two reactions: the carboxylation of D-ribulose 1,5-bisphosphate, the primary event in carbon dioxide fixation, as well as the oxidative fragmentation of the pentose substrate in the photorespiration process. Both reactions occur simultaneously and in competition at the same active site. The sequence is that of Ribulose bisphosphate carboxylase large chain from Hippocratea richardiana.